The sequence spans 446 residues: uncharacterized protein (446 aa).

Disordered regions lie at residues S198 to S233, N309 to K337, and S394 to T431. Positions I199–Q224 are enriched in low complexity. The segment covering D317–L333 has biased composition (acidic residues). Basic and acidic residues predominate over residues V397–K418.

This is an uncharacterized protein from Acanthamoeba polyphaga mimivirus (APMV).